The following is an 842-amino-acid chain: Protein P (842 aa).

The interval 1-177 is terminal protein domain (TP); it reads MPLSYQHFRR…FCGSPYSWEQ (177 aa). Residues 178–345 are spacer; the sequence is ELHHGAFLDG…YCLSHLVNLL (168 aa). The interval 186–273 is disordered; that stretch reads DGPSRMGEES…AKNIASRSAS (88 aa). Polar residues predominate over residues 223–239; that stretch reads GPQSQQRPLDRSQQGRS. Residues 346 to 689 are polymerase/reverse transcriptase domain (RT); the sequence is EDWGPCTEHG…YLNLYPVARQ (344 aa). In terms of domain architecture, Reverse transcriptase spans 356–599; it reads RHHIRIPRTP…YSLNFMGYVI (244 aa). Mg(2+) is bound by residues Asp-428, Asp-550, and Asp-551.

The protein belongs to the hepadnaviridae P protein family.

It catalyses the reaction DNA(n) + a 2'-deoxyribonucleoside 5'-triphosphate = DNA(n+1) + diphosphate. The catalysed reaction is Endonucleolytic cleavage to 5'-phosphomonoester.. Activated by host HSP70 and HSP40 in vitro to be able to bind the epsilon loop of the pgRNA. Because deletion of the RNase H region renders the protein partly chaperone-independent, the chaperones may be needed indirectly to relieve occlusion of the RNA-binding site by this domain. Inhibited by several reverse-transcriptase inhibitors: Lamivudine, Adefovir and Entecavir. Functionally, multifunctional enzyme that converts the viral RNA genome into dsDNA in viral cytoplasmic capsids. This enzyme displays a DNA polymerase activity that can copy either DNA or RNA templates, and a ribonuclease H (RNase H) activity that cleaves the RNA strand of RNA-DNA heteroduplexes in a partially processive 3'- to 5'-endonucleasic mode. Neo-synthesized pregenomic RNA (pgRNA) are encapsidated together with the P protein, and reverse-transcribed inside the nucleocapsid. Initiation of reverse-transcription occurs first by binding the epsilon loop on the pgRNA genome, and is initiated by protein priming, thereby the 5'-end of (-)DNA is covalently linked to P protein. Partial (+)DNA is synthesized from the (-)DNA template and generates the relaxed circular DNA (RC-DNA) genome. After budding and infection, the RC-DNA migrates in the nucleus, and is converted into a plasmid-like covalently closed circular DNA (cccDNA). The activity of P protein does not seem to be necessary for cccDNA generation, and is presumably released from (+)DNA by host nuclear DNA repair machinery. This is Protein P from Homo sapiens (Human).